A 463-amino-acid polypeptide reads, in one-letter code: MTKPFSVLLASLLVITSTVSPLASAQQSQPLDRIAAIVDEDVVLQSELDRAVRNVKSQYAGRDNQLPPDDVLQRQVLERLVLVKLQVGRAEGSGIRVSDEELNRAIASIAQQNGTSVDGLRQKLAADGMGYADFRASVRDEIIVQRLRQSFAQSRISVSEGEVDTALAQQATTGSQYHLAHILVGLPEGATAEQIATGQKKVDGVKALIDKGELDFSAAAVRYSDSPNALEGGDLGWRSLDEIPNAFAQLIRDMQPGQVAGPLRGPSGFQLLKLVEMRDANAGGEKKVLTEYNARHILVRIGDNQTEAQAKAKIDTLRARIVGGADFQATAKESSEDTNSRGQGGDLGWFPADAFGPDFGKQVEGLTDGAVSEPFRTQAGWHIVQRVGTRQTDVSAENQRAQIRETIGRRKLEEEYNRYLQELRGEAFVSFRTGDRADADATAAPEPAAAPAAPTPPPAQPTR.

The first 25 residues, 1 to 25 (MTKPFSVLLASLLVITSTVSPLASA), serve as a signal peptide directing secretion. PpiC domains are found at residues 174–276 (GSQY…KLVE) and 289–388 (LTEY…QRVG). Disordered regions lie at residues 329 to 348 (ATAKESSEDTNSRGQGGDLG) and 434 to 463 (GDRADADATAAPEPAAAPAAPTPPPAQPTR). A compositionally biased stretch (low complexity) spans 440 to 452 (DATAAPEPAAAPA). Pro residues predominate over residues 453-463 (APTPPPAQPTR).

The protein resides in the periplasm. The catalysed reaction is [protein]-peptidylproline (omega=180) = [protein]-peptidylproline (omega=0). Its function is as follows. Chaperone involved in the correct folding and assembly of outer membrane proteins. Recognizes specific patterns of aromatic residues and the orientation of their side chains, which are found more frequently in integral outer membrane proteins. May act in both early periplasmic and late outer membrane-associated steps of protein maturation. This is Chaperone SurA from Xanthomonas campestris pv. campestris (strain 8004).